Here is a 179-residue protein sequence, read N- to C-terminus: Large ribosomal subunit protein uL6 (179 aa).

This sequence belongs to the universal ribosomal protein uL6 family. As to quaternary structure, part of the 50S ribosomal subunit.

In terms of biological role, this protein binds to the 23S rRNA, and is important in its secondary structure. It is located near the subunit interface in the base of the L7/L12 stalk, and near the tRNA binding site of the peptidyltransferase center. This is Large ribosomal subunit protein uL6 from Spiroplasma kunkelii.